Consider the following 492-residue polypeptide: Protein nucleotidyltransferase YdiU (492 aa).

Residues Gly-101, Gly-103, Arg-104, Lys-124, Asp-136, Gly-137, Arg-187, and Arg-194 each contribute to the ATP site. Catalysis depends on Asp-268, which acts as the Proton acceptor. Mg(2+) is bound by residues Asn-269 and Asp-278. Asp-278 is a binding site for ATP.

The protein belongs to the SELO family. Mg(2+) serves as cofactor. It depends on Mn(2+) as a cofactor.

The catalysed reaction is L-seryl-[protein] + ATP = 3-O-(5'-adenylyl)-L-seryl-[protein] + diphosphate. It carries out the reaction L-threonyl-[protein] + ATP = 3-O-(5'-adenylyl)-L-threonyl-[protein] + diphosphate. It catalyses the reaction L-tyrosyl-[protein] + ATP = O-(5'-adenylyl)-L-tyrosyl-[protein] + diphosphate. The enzyme catalyses L-histidyl-[protein] + UTP = N(tele)-(5'-uridylyl)-L-histidyl-[protein] + diphosphate. The catalysed reaction is L-seryl-[protein] + UTP = O-(5'-uridylyl)-L-seryl-[protein] + diphosphate. It carries out the reaction L-tyrosyl-[protein] + UTP = O-(5'-uridylyl)-L-tyrosyl-[protein] + diphosphate. Its function is as follows. Nucleotidyltransferase involved in the post-translational modification of proteins. It can catalyze the addition of adenosine monophosphate (AMP) or uridine monophosphate (UMP) to a protein, resulting in modifications known as AMPylation and UMPylation. The chain is Protein nucleotidyltransferase YdiU from Corynebacterium efficiens (strain DSM 44549 / YS-314 / AJ 12310 / JCM 11189 / NBRC 100395).